The following is a 589-amino-acid chain: Sulfite reductase [NADPH] hemoprotein beta-component (589 aa).

[4Fe-4S] cluster-binding residues include Cys443, Cys449, Cys488, and Cys492. Cys492 contributes to the siroheme binding site.

This sequence belongs to the nitrite and sulfite reductase 4Fe-4S domain family. Alpha(8)-beta(8). The alpha component is a flavoprotein, the beta component is a hemoprotein. The cofactor is siroheme. [4Fe-4S] cluster serves as cofactor.

The enzyme catalyses hydrogen sulfide + 3 NADP(+) + 3 H2O = sulfite + 3 NADPH + 4 H(+). It functions in the pathway sulfur metabolism; hydrogen sulfide biosynthesis; hydrogen sulfide from sulfite (NADPH route): step 1/1. Functionally, component of the sulfite reductase complex that catalyzes the 6-electron reduction of sulfite to sulfide. This is one of several activities required for the biosynthesis of L-cysteine from sulfate. The sequence is that of Sulfite reductase [NADPH] hemoprotein beta-component from Neisseria meningitidis serogroup C (strain 053442).